We begin with the raw amino-acid sequence, 215 residues long: Large ribosomal subunit protein bL25 (215 aa).

The segment covering Glu-192–Glu-203 has biased composition (acidic residues). The segment at Glu-192–Glu-215 is disordered. Over residues Glu-205–Glu-215 the composition is skewed to basic and acidic residues.

Belongs to the bacterial ribosomal protein bL25 family. CTC subfamily. In terms of assembly, part of the 50S ribosomal subunit; part of the 5S rRNA/L5/L18/L25 subcomplex. Contacts the 5S rRNA. Binds to the 5S rRNA independently of L5 and L18.

This is one of the proteins that binds to the 5S RNA in the ribosome where it forms part of the central protuberance. The protein is Large ribosomal subunit protein bL25 of Thermotoga sp. (strain RQ2).